Reading from the N-terminus, the 259-residue chain is Undecaprenyl-diphosphatase 3 (259 aa).

Transmembrane regions (helical) follow at residues 1-21, 39-59, 71-91, 99-119, 133-153, 174-194, 208-228, and 239-259; these read MNWL…FLPI, AGLF…FIYY, FSKL…IGLL, ISKT…FLYM, ITYK…FPAI, AYFS…LQFV, SLIV…SWMI, and FAYY…TDVF.

The protein belongs to the UppP family.

Its subcellular location is the cell membrane. The catalysed reaction is di-trans,octa-cis-undecaprenyl diphosphate + H2O = di-trans,octa-cis-undecaprenyl phosphate + phosphate + H(+). In terms of biological role, catalyzes the dephosphorylation of undecaprenyl diphosphate (UPP). Confers resistance to bacitracin. The sequence is that of Undecaprenyl-diphosphatase 3 from Bacillus cereus (strain ATCC 14579 / DSM 31 / CCUG 7414 / JCM 2152 / NBRC 15305 / NCIMB 9373 / NCTC 2599 / NRRL B-3711).